Consider the following 350-residue polypeptide: Galactokinase (350 aa).

14 to 17 (EHTD) serves as a coordination point for substrate. Residues Ser46 and 96–102 (GAGLSSS) each bind ATP. Residues Ser102 and Glu134 each coordinate Mg(2+). The Proton acceptor role is filled by Asp146. Residue Tyr196 participates in substrate binding.

Belongs to the GHMP kinase family. GalK subfamily.

It is found in the cytoplasm. It carries out the reaction alpha-D-galactose + ATP = alpha-D-galactose 1-phosphate + ADP + H(+). Its pathway is carbohydrate metabolism; galactose metabolism. Its function is as follows. Catalyzes the transfer of the gamma-phosphate of ATP to D-galactose to form alpha-D-galactose-1-phosphate (Gal-1-P). The chain is Galactokinase from Thermotoga neapolitana.